The chain runs to 564 residues: Myb-like protein F (564 aa).

3 disordered regions span residues 22 to 107 (YNNS…NYNN), 122 to 203 (NYNN…YNGG), and 310 to 410 (NYNN…TKKY). A compositionally biased stretch (low complexity) spans 23–79 (NNSNHYNDNNDNNNNNNNNNNDNNNNDNNNNNNNNNNSIINNESDNESNGTSNNYND). A compositionally biased stretch (basic and acidic residues) spans 82 to 96 (NDNHHHHQDDEHHGN). Composition is skewed to low complexity over residues 97-107 (GNDNDNENYNN), 135-173 (EINS…NNSK), 193-203 (NNNNNNKYNGG), and 310-364 (NYNN…NSSN). A compositionally biased stretch (basic and acidic residues) spans 365–409 (KEYKEKEYKEKEYKEKEFKESKDSSLKRKSSSDDDGDDSGRDTKK). The region spanning 412–464 (PGRTVWTLEEEELYKEVFNHYGKNWKKIKTHFPDKSKSQVTSHGQYLIKINKL) is the SANT domain. Low complexity predominate over residues 519–556 (NNENTNDNNNHNNNNYNDNNNNSNNNNNFNNSNNNNTN). The segment at 519–564 (NNENTNDNNNHNNNNYNDNNNNSNNNNNFNNSNNNNTNKFIDEDDD) is disordered.

Its subcellular location is the nucleus. This Dictyostelium discoideum (Social amoeba) protein is Myb-like protein F (mybF).